The sequence spans 183 residues: Ribosome-recycling factor (183 aa).

It belongs to the RRF family.

It is found in the cytoplasm. In terms of biological role, responsible for the release of ribosomes from messenger RNA at the termination of protein biosynthesis. May increase the efficiency of translation by recycling ribosomes from one round of translation to another. The chain is Ribosome-recycling factor from Bifidobacterium longum (strain DJO10A).